A 106-amino-acid polypeptide reads, in one-letter code: Protein translation factor SUI1 homolog (106 aa).

This sequence belongs to the SUI1 family.

Additional factor that functions in concert with eIF-2 and the initiator tRNA in directing the ribosome to the proper start site of translation. This chain is Protein translation factor SUI1 homolog, found in Acanthamoeba polyphaga mimivirus (APMV).